A 230-amino-acid chain; its full sequence is 2,3-bisphosphoglycerate-dependent phosphoglycerate mutase (230 aa).

Substrate-binding positions include 8 to 15 (RHGESEWN), 21 to 22 (TG), arginine 60, 87 to 90 (ERHY), lysine 98, 114 to 115 (RR), and 183 to 184 (GN). The Tele-phosphohistidine intermediate role is filled by histidine 9. The active-site Proton donor/acceptor is glutamate 87.

The protein belongs to the phosphoglycerate mutase family. BPG-dependent PGAM subfamily.

The catalysed reaction is (2R)-2-phosphoglycerate = (2R)-3-phosphoglycerate. It functions in the pathway carbohydrate degradation; glycolysis; pyruvate from D-glyceraldehyde 3-phosphate: step 3/5. In terms of biological role, catalyzes the interconversion of 2-phosphoglycerate and 3-phosphoglycerate. The chain is 2,3-bisphosphoglycerate-dependent phosphoglycerate mutase from Streptococcus pneumoniae (strain P1031).